We begin with the raw amino-acid sequence, 265 residues long: GTP cyclohydrolase FolE2 (265 aa).

This sequence belongs to the GTP cyclohydrolase IV family.

It catalyses the reaction GTP + H2O = 7,8-dihydroneopterin 3'-triphosphate + formate + H(+). Its pathway is cofactor biosynthesis; 7,8-dihydroneopterin triphosphate biosynthesis; 7,8-dihydroneopterin triphosphate from GTP: step 1/1. Functionally, converts GTP to 7,8-dihydroneopterin triphosphate. This chain is GTP cyclohydrolase FolE2, found in Bordetella bronchiseptica (strain ATCC BAA-588 / NCTC 13252 / RB50) (Alcaligenes bronchisepticus).